The chain runs to 288 residues: ATP synthase gamma chain (288 aa).

The protein belongs to the ATPase gamma chain family. As to quaternary structure, F-type ATPases have 2 components, CF(1) - the catalytic core - and CF(0) - the membrane proton channel. CF(1) has five subunits: alpha(3), beta(3), gamma(1), delta(1), epsilon(1). CF(0) has three main subunits: a, b and c.

It is found in the cell inner membrane. Its function is as follows. Produces ATP from ADP in the presence of a proton gradient across the membrane. The gamma chain is believed to be important in regulating ATPase activity and the flow of protons through the CF(0) complex. This is ATP synthase gamma chain from Rickettsia bellii (strain RML369-C).